We begin with the raw amino-acid sequence, 175 residues long: MKAQPIRAAVRIIGIDPGLRRTGWGVIESEGNRLIYVGCGSVEPPDDLPLANRLLAIHEGLAKVLNDFQPLEAAVEQTFVNKDGVATLKLGQARGIAMLAPAMFGISVAEYAPNQVKKTVVGAGHADKGQIAVMLKILLPKAEPPSADAADALAIAITHAHHRQGQALRMKVAGL.

Active-site residues include aspartate 16, glutamate 76, and aspartate 148. 3 residues coordinate Mg(2+): aspartate 16, glutamate 76, and aspartate 148.

It belongs to the RuvC family. In terms of assembly, homodimer which binds Holliday junction (HJ) DNA. The HJ becomes 2-fold symmetrical on binding to RuvC with unstacked arms; it has a different conformation from HJ DNA in complex with RuvA. In the full resolvosome a probable DNA-RuvA(4)-RuvB(12)-RuvC(2) complex forms which resolves the HJ. Mg(2+) is required as a cofactor.

Its subcellular location is the cytoplasm. It catalyses the reaction Endonucleolytic cleavage at a junction such as a reciprocal single-stranded crossover between two homologous DNA duplexes (Holliday junction).. Its function is as follows. The RuvA-RuvB-RuvC complex processes Holliday junction (HJ) DNA during genetic recombination and DNA repair. Endonuclease that resolves HJ intermediates. Cleaves cruciform DNA by making single-stranded nicks across the HJ at symmetrical positions within the homologous arms, yielding a 5'-phosphate and a 3'-hydroxyl group; requires a central core of homology in the junction. The consensus cleavage sequence is 5'-(A/T)TT(C/G)-3'. Cleavage occurs on the 3'-side of the TT dinucleotide at the point of strand exchange. HJ branch migration catalyzed by RuvA-RuvB allows RuvC to scan DNA until it finds its consensus sequence, where it cleaves and resolves the cruciform DNA. This Bradyrhizobium sp. (strain BTAi1 / ATCC BAA-1182) protein is Crossover junction endodeoxyribonuclease RuvC.